The following is a 434-amino-acid chain: Maltoporin (434 aa).

An N-terminal signal peptide occupies residues 1–25 (MKMKAKWLPIAAAVTAALASQAAFA).

It belongs to the porin LamB (TC 1.B.3) family. Homotrimer formed of three 18-stranded antiparallel beta-barrels, containing three independent channels.

Its subcellular location is the cell outer membrane. It catalyses the reaction beta-maltose(in) = beta-maltose(out). Functionally, involved in the transport of maltose and maltodextrins. This Aeromonas hydrophila protein is Maltoporin.